A 599-amino-acid polypeptide reads, in one-letter code: Zinc finger BED domain-containing protein 3 (599 aa).

Positions L70–G104 are disordered. Positions G72–P81 are enriched in gly residues. The BED-type zinc-finger motif lies at V123 to V176. The Zn(2+) site is built by C144, C147, H164, and H169. 2 disordered regions span residues G208–N283 and A440–D491. 2 stretches are compositionally biased toward low complexity: residues S223–S246 and S268–N283. Residues A440 to A455 show a composition bias toward polar residues. Residues G460–T483 show a composition bias toward acidic residues.

Expressed in neuronal cell bodies in the ventral cord and HSN neurons.

The protein resides in the nucleus. In terms of biological role, probable transcription factor. Involved in vulval organogenesis. During vulval development, may play a role in the regulation of cell cycle regulators such as cul-1. Positively modulates expression of homeobox protein lin-39, perhaps by binding to regulatory regions of the lin-39 gene, acting in the vulval lineage. Plays a role in larval molting. The protein is Zinc finger BED domain-containing protein 3 of Caenorhabditis elegans.